Reading from the N-terminus, the 307-residue chain is Protoheme IX farnesyltransferase (307 aa).

8 helical membrane-spanning segments follow: residues 32–52 (VVEL…RGIP), 54–74 (LWLV…AGAF), 105–125 (LVFA…FTNW), 126–146 (LAAG…TLIL), 169–189 (WAVV…VIFL), 222–242 (VVGL…LLLI), 244–264 (VARM…WFLY), and 287–307 (GSIA…LLPF).

It belongs to the UbiA prenyltransferase family. Protoheme IX farnesyltransferase subfamily.

It localises to the cell membrane. The catalysed reaction is heme b + (2E,6E)-farnesyl diphosphate + H2O = Fe(II)-heme o + diphosphate. Its pathway is porphyrin-containing compound metabolism; heme O biosynthesis; heme O from protoheme: step 1/1. In terms of biological role, converts heme B (protoheme IX) to heme O by substitution of the vinyl group on carbon 2 of heme B porphyrin ring with a hydroxyethyl farnesyl side group. The sequence is that of Protoheme IX farnesyltransferase from Leifsonia xyli subsp. xyli (strain CTCB07).